We begin with the raw amino-acid sequence, 331 residues long: 5,10-methylenetetrahydromethanopterin reductase (331 aa).

The protein belongs to the mer family.

It is found in the cytoplasm. The catalysed reaction is 5-methyl-5,6,7,8-tetrahydromethanopterin + oxidized coenzyme F420-(gamma-L-Glu)(n) + H(+) = 5,10-methylenetetrahydromethanopterin + reduced coenzyme F420-(gamma-L-Glu)(n). The protein operates within one-carbon metabolism; methanogenesis from CO(2); methyl-coenzyme M from 5,10-methylene-5,6,7,8-tetrahydromethanopterin: step 1/2. Functionally, catalyzes the reversible reduction of methylene-H(4)MPT to methyl-H(4)MPT. In Methanocaldococcus jannaschii (strain ATCC 43067 / DSM 2661 / JAL-1 / JCM 10045 / NBRC 100440) (Methanococcus jannaschii), this protein is 5,10-methylenetetrahydromethanopterin reductase.